A 445-amino-acid chain; its full sequence is MIPVIALVGRPNVGKSTLFNQLTRSRDALVADYPGLTRDRKYGDGKLGEHEFIVIDTGGISGDEQGIDEKMARQSLLAIEEADVVLFLVDGRHGLNPADEMIASHLRRSNKQVSLVVNKTDGINEDIALADFYSLGFGELHPIAASHGKGVHVLIDKVMLPFAERVEEAKNQISIESRGIRIGVVGRPNVGKSTLVNRMLGEDRVVVYDMPGTTRDSVYIPYVRNDKEYTLIDTAGIRRRKHVKEAVEKFSIVKALQAIQDANVVIVVIDSHENLVEQDLHMIGYVLDAGRGVIIAINKWDGLKKDDREHIKSEVERRLGFVPYAKVHYISALHGTGVGDLYDTIESTYESCYAKWTTNRLTRILEDSIAEHQPPMVNSRRIKLRYAHQGGSNPPRIVVHGNQTDSLPGSYKRYLENKFRTVLNITGTPIIFEFKSAENPFAPKK.

EngA-type G domains lie at 3-166 and 180-353; these read PVIA…AERV and IRIG…ESCY. GTP is bound by residues 9-16, 56-60, 118-121, 186-193, 233-237, and 298-301; these read GRPNVGKS, DTGGI, NKTD, DTAGI, and NKWD. The KH-like domain maps to 354 to 438; that stretch reads AKWTTNRLTR…PIIFEFKSAE (85 aa).

This sequence belongs to the TRAFAC class TrmE-Era-EngA-EngB-Septin-like GTPase superfamily. EngA (Der) GTPase family. As to quaternary structure, associates with the 50S ribosomal subunit.

In terms of biological role, GTPase that plays an essential role in the late steps of ribosome biogenesis. This chain is GTPase Der, found in Marinomonas sp. (strain MWYL1).